The chain runs to 256 residues: Dihydroorotate dehydrogenase B (NAD(+)), electron transfer subunit (256 aa).

The FAD-binding FR-type domain maps to I2–L100. Residues R51–S54, I68–R70, and G75–T76 contribute to the FAD site. The [2Fe-2S] cluster site is built by C220, C225, C228, and C243.

Belongs to the PyrK family. Heterotetramer of 2 PyrK and 2 PyrD type B subunits. It depends on [2Fe-2S] cluster as a cofactor. FAD is required as a cofactor.

Its pathway is pyrimidine metabolism; UMP biosynthesis via de novo pathway; orotate from (S)-dihydroorotate (NAD(+) route): step 1/1. Responsible for channeling the electrons from the oxidation of dihydroorotate from the FMN redox center in the PyrD type B subunit to the ultimate electron acceptor NAD(+). The chain is Dihydroorotate dehydrogenase B (NAD(+)), electron transfer subunit from Streptococcus pneumoniae (strain ATCC BAA-255 / R6).